A 341-amino-acid polypeptide reads, in one-letter code: 4-hydroxy-2-oxovalerate aldolase (341 aa).

In terms of domain architecture, Pyruvate carboxyltransferase spans 9 to 260; that stretch reads VVITDSTLRD…ATGIDLYRVL (252 aa). Residue 17–18 participates in substrate binding; that stretch reads RD. Position 18 (aspartate 18) interacts with Mn(2+). Catalysis depends on histidine 21, which acts as the Proton acceptor. Serine 172 and histidine 199 together coordinate substrate. Histidine 199 and histidine 201 together coordinate Mn(2+).

The protein belongs to the 4-hydroxy-2-oxovalerate aldolase family.

The catalysed reaction is (S)-4-hydroxy-2-oxopentanoate = acetaldehyde + pyruvate. This chain is 4-hydroxy-2-oxovalerate aldolase, found in Spirochaeta aurantia.